The primary structure comprises 410 residues: NADH-quinone oxidoreductase subunit H (410 aa).

Transmembrane regions (helical) follow at residues 16 to 36, 84 to 104, 124 to 144, 165 to 185, 198 to 218, 260 to 280, 288 to 308, 320 to 340, and 353 to 373; these read LILAKSLGVFVFLLLTVLAAI, WIYLAAPVISVIPAFMAFAVI, LPVAVLYILAVTSIGVYGIVL, VISYEIAMALSFVAVFIYAGT, VWFIFLLLPSFLVYLTSMVGE, VSALATTLFLGGWHAPWPISI, WWPLLWFTAKVWLFLFFFMWL, FMRLGWKLLIPVSLAWIAIVA, and WVTALIGVAGVAAILASLLAW. A disordered region spans residues 384–410; the sequence is SHSPPAQSSDHGAFPVPPLPVKEPADA.

It belongs to the complex I subunit 1 family. NDH-1 is composed of 14 different subunits. Subunits NuoA, H, J, K, L, M, N constitute the membrane sector of the complex.

The protein localises to the cell membrane. The catalysed reaction is a quinone + NADH + 5 H(+)(in) = a quinol + NAD(+) + 4 H(+)(out). NDH-1 shuttles electrons from NADH, via FMN and iron-sulfur (Fe-S) centers, to quinones in the respiratory chain. The immediate electron acceptor for the enzyme in this species is believed to be menaquinone. Couples the redox reaction to proton translocation (for every two electrons transferred, four hydrogen ions are translocated across the cytoplasmic membrane), and thus conserves the redox energy in a proton gradient. This is NADH-quinone oxidoreductase subunit H from Mycolicibacterium gilvum (strain PYR-GCK) (Mycobacterium gilvum (strain PYR-GCK)).